A 635-amino-acid chain; its full sequence is tRNA 5-methylaminomethyl-2-thiouridine biosynthesis bifunctional protein MnmC (635 aa).

Positions 1 to 227 (MSEPIDWLPD…KRSNLQAEFD (227 aa)) are tRNA (mnm(5)s(2)U34)-methyltransferase. Residues 254 to 635 (IGGGLSGAAV…ALSTERLPAD (382 aa)) form an FAD-dependent cmnm(5)s(2)U34 oxidoreductase region.

The protein in the N-terminal section; belongs to the methyltransferase superfamily. tRNA (mnm(5)s(2)U34)-methyltransferase family. It in the C-terminal section; belongs to the DAO family. FAD serves as cofactor.

Its subcellular location is the cytoplasm. The enzyme catalyses 5-aminomethyl-2-thiouridine(34) in tRNA + S-adenosyl-L-methionine = 5-methylaminomethyl-2-thiouridine(34) in tRNA + S-adenosyl-L-homocysteine + H(+). Functionally, catalyzes the last two steps in the biosynthesis of 5-methylaminomethyl-2-thiouridine (mnm(5)s(2)U) at the wobble position (U34) in tRNA. Catalyzes the FAD-dependent demodification of cmnm(5)s(2)U34 to nm(5)s(2)U34, followed by the transfer of a methyl group from S-adenosyl-L-methionine to nm(5)s(2)U34, to form mnm(5)s(2)U34. This Paracidovorax citrulli (strain AAC00-1) (Acidovorax citrulli) protein is tRNA 5-methylaminomethyl-2-thiouridine biosynthesis bifunctional protein MnmC.